Consider the following 574-residue polypeptide: Pentatricopeptide repeat-containing protein At5g25630 (574 aa).

The segment covering 1–21 has biased composition (basic and acidic residues); the sequence is MEDVNQEKKKVPPMSEPERST. The tract at residues 1–25 is disordered; sequence MEDVNQEKKKVPPMSEPERSTPIKT. 12 PPR repeats span residues 44 to 78, 79 to 113, 114 to 148, 149 to 183, 187 to 221, 222 to 258, 259 to 293, 294 to 328, 329 to 363, 364 to 394, 398 to 432, and 433 to 467; these read TVRSRTKLMNVLIERGRPHEAQTVFKTLAETGHRP, SLISYTTLLAAMTVQKQYGSISSIVSEVEQSGTKL, DSIFFNAVINAFSESGNMEDAVQALLKMKELGLNP, TTSTYNTLIKGYGIAGKPERSSELLDLMLEEGNVD, NIRTFNVLVQAWCKKKKVEEAWEVVKKMEECGVRP, DTVTYNTIATCYVQKGETVRAESEVVEKMVMKEKAKP, NGRTCGIVVGGYCREGRVRDGLRFVRRMKEMRVEA, NLVVFNSLINGFVEVMDRDGIDEVLTLMKECNVKA, DVITYSTVMNAWSSAGYMEKAAQVFKEMVKAGVKP, DAHAYSILAKGYVRAKEPKKAEELLETLIVE, NVVIFTTVISGWCSNGSMDDAMRVFNKMCKFGVSP, and NIKTFETLMWGYLEVKQPWKAEEVLQMMRGCGVKP.

This sequence belongs to the PPR family. P subfamily.

This chain is Pentatricopeptide repeat-containing protein At5g25630, found in Arabidopsis thaliana (Mouse-ear cress).